Reading from the N-terminus, the 321-residue chain is tRNA uridine(34) hydroxylase (321 aa).

A Rhodanese domain is found at 135-233 (DDPLTLVIDT…YLEEVPENES (99 aa)). The active-site Cysteine persulfide intermediate is cysteine 193.

This sequence belongs to the TrhO family.

It catalyses the reaction uridine(34) in tRNA + AH2 + O2 = 5-hydroxyuridine(34) in tRNA + A + H2O. In terms of biological role, catalyzes oxygen-dependent 5-hydroxyuridine (ho5U) modification at position 34 in tRNAs. The sequence is that of tRNA uridine(34) hydroxylase from Prochlorococcus marinus (strain SARG / CCMP1375 / SS120).